Here is a 538-residue protein sequence, read N- to C-terminus: Carboxypeptidase 2 (538 aa).

The signal sequence occupies residues 1 to 21 (MVAYRFLTLISLGLGSHCASA). The N-linked (GlcNAc...) asparagine glycan is linked to N46. A disordered region spans residues 53–76 (PAFTSPGTVPRGFSDGTSGPTRDE). A Peptidase M14 domain is found at 71–351 (GPTRDETMEG…VMVKSILQTA (281 aa)). 3 residues coordinate Zn(2+): H136, E139, and H224. Residue E322 is the Proton donor/acceptor of the active site. N-linked (GlcNAc...) asparagine glycans are attached at residues N393 and N459.

The protein belongs to the peptidase M14 family. The cofactor is Zn(2+).

It is found in the secreted. Functionally, extracellular metalloprotease that contributes to pathogenicity. This chain is Carboxypeptidase 2 (MCPB), found in Trichophyton equinum (Horse ringworm fungus).